The following is a 569-amino-acid chain: Peroxisomal targeting signal receptor (569 aa).

A Glycyl cysteine thioester (Cys-Gly) (interchain with G-Cter in ubiquitin) cross-link involves residue Cys5. The segment at 6-28 (SVGANPLAQLNKRVQQDRTLQHG) is amphipathic helix 1 (AH1). Lys17 is covalently cross-linked (Glycyl lysine isopeptide (Lys-Gly) (interchain with G-Cter in ubiquitin)). An amphipathic helix 2 (AH2) region spans residues 53–71 (KFQMEQFMAGKASSGGNMF). The WxxxF/Y motif 1 signature appears at 112–116 (WSQEF). The tract at residues 150 to 154 (PMNMM) is amphipathic helix 3 (AH3). A WxxxF/Y motif 2 motif is present at residues 181-185 (WEQQF). The segment at 229–245 (FQQIWNDIHDQTDDLDS) is amphipathic helix 4 (AH4). TPR repeat units follow at residues 281–315 (NTDA…DPGH), 316–349 (VDAW…DPHN), 417–450 (PDVQ…RPDD), 452–484 (CMWN…KPTF), and 486–518 (RARY…HEVE).

It belongs to the peroxisomal targeting signal receptor family. As to quaternary structure, interacts (via WxxxF/Y and LVxEF motifs) with PEX14; promoting translocation through the PEX13-PEX14 docking complex. In terms of processing, monoubiquitinated at Cys-5 by PEX2 during PEX5 passage through the retrotranslocation channel: monoubiquitination acts as a signal for PEX5 extraction and is required for proper export from peroxisomes and recycling. When PEX5 recycling is compromised, polyubiquitinated at Lys-17 by PEX10 during its passage through the retrotranslocation channel, leading to its degradation.

It localises to the cytoplasm. Its subcellular location is the cytosol. The protein resides in the peroxisome matrix. Receptor that mediates peroxisomal import of proteins containing a C-terminal PTS1-type tripeptide peroxisomal targeting signal (SKL-type). Binds to cargo proteins containing a PTS1 peroxisomal targeting signal in the cytosol, and translocates them into the peroxisome matrix by passing through the PEX13-PEX14 docking complex along with cargo proteins. PEX5 receptor is then retrotranslocated into the cytosol, leading to release of bound cargo in the peroxisome matrix, and reset for a subsequent peroxisome import cycle. The polypeptide is Peroxisomal targeting signal receptor (PEX5) (Eremothecium gossypii (strain ATCC 10895 / CBS 109.51 / FGSC 9923 / NRRL Y-1056) (Yeast)).